We begin with the raw amino-acid sequence, 229 residues long: uncharacterized protein (229 aa).

Transmembrane regions (helical) follow at residues 21 to 41 (IYSL…LMLY), 56 to 76 (MIYY…SGAA), 83 to 103 (ALPI…FIIV), 109 to 129 (TVFQ…IIGV), 141 to 161 (AMFA…FIGS), 162 to 182 (GMMS…LIAS), and 202 to 222 (WAVA…ISLL).

It belongs to the BI1 family.

It is found in the cell membrane. This is an uncharacterized protein from Streptococcus pyogenes serotype M3 (strain ATCC BAA-595 / MGAS315).